The chain runs to 265 residues: Shikimate dehydrogenase (NADP(+)) (265 aa).

Residues 15-17 (SLS) and Thr-62 contribute to the shikimate site. The Proton acceptor role is filled by Lys-66. Residues Asn-87 and Asp-102 each coordinate shikimate. Residues 125 to 129 (GAGGA), 149 to 154 (NRTLEK), and Leu-209 contribute to the NADP(+) site. A shikimate-binding site is contributed by Tyr-211. Gly-233 serves as a coordination point for NADP(+).

Belongs to the shikimate dehydrogenase family. In terms of assembly, homodimer.

The catalysed reaction is shikimate + NADP(+) = 3-dehydroshikimate + NADPH + H(+). Its pathway is metabolic intermediate biosynthesis; chorismate biosynthesis; chorismate from D-erythrose 4-phosphate and phosphoenolpyruvate: step 4/7. Involved in the biosynthesis of the chorismate, which leads to the biosynthesis of aromatic amino acids. Catalyzes the reversible NADPH linked reduction of 3-dehydroshikimate (DHSA) to yield shikimate (SA). This chain is Shikimate dehydrogenase (NADP(+)), found in Legionella pneumophila (strain Corby).